A 524-amino-acid polypeptide reads, in one-letter code: MLGLTLREISAALKQGQVSPIELCQRCLSRIKETKFLNAYITVTEERALKQAAESEKRYEKGQELGVLDGIPFSVKDNFSTAGIETTCASNMLKGYVPPYNATVVQKLLDQGAVLMGKTNLDEFAMGSGSTDGVFGPVRNPWSYSKQYRGKGSPDSSQEDQEPQWLVAGGSSGGSAAAVAAFTCFVALGSDTGGSTRNPAAHCGVVGLKPTYGLVSRHGLIPLVNSMDVPGILTRCVEDAAIILEVLAGHDPKDSTTVQDLVSPLALPSSVDISKLCIGIPKEYRAEGLSCETQAFWTRAADLFQSAGARVIEVSLPHTSYSIDCYHVLCTAEVASNMARFDGLEYGHRCNRDVSTEAMYAATRREGFNDVVRGRILSGNFFLLKENYNDYFIKAQKVRRLIANDFIHVFSSGVDVLLTPTTLSDAVPYLEFIKEDNSTRSAQDDVFTQAVNMAGLPAVTVPAARSKRGLPVGLQFIGRAFCEQQLLTVAKWFEQEVRFPALCLEDLTEAGLVAARHEKSVSVS.

K76 (charge relay system) is an active-site residue. The disordered stretch occupies residues 146 to 168 (KQYRGKGSPDSSQEDQEPQWLVA). The active-site Charge relay system is S171. The active-site Acyl-ester intermediate is S195.

This sequence belongs to the amidase family. GatA subfamily. Subunit of the heterotrimeric GatCAB amidotransferase (AdT) complex, composed of A (QRSL1), B (GATB) and C (GATC) subunits.

The protein resides in the mitochondrion. The enzyme catalyses L-glutamyl-tRNA(Gln) + L-glutamine + ATP + H2O = L-glutaminyl-tRNA(Gln) + L-glutamate + ADP + phosphate + H(+). Allows the formation of correctly charged Gln-tRNA(Gln) through the transamidation of misacylated Glu-tRNA(Gln) in the mitochondria. The reaction takes place in the presence of glutamine and ATP through an activated gamma-phospho-Glu-tRNA(Gln). In Ornithorhynchus anatinus (Duckbill platypus), this protein is Glutamyl-tRNA(Gln) amidotransferase subunit A, mitochondrial.